Consider the following 531-residue polypeptide: Basal body-orientation factor 1 (531 aa).

Positions 1–19 (MPKLKVKAGKGKKGKRKKA) are enriched in basic residues. Residues 1–32 (MPKLKVKAGKGKKGKRKKAGKNEHRLDKESEV) are disordered. Over residues 20–32 (GKNEHRLDKESEV) the composition is skewed to basic and acidic residues. Coiled-coil stretches lie at residues 26-213 (LDKE…AEKA) and 274-365 (VQEK…VESF). A disordered region spans residues 465–505 (QSRKSPGLKPSPPADVSSIKEKEINTSNLEEKPEESSSTFI). A compositionally biased stretch (basic and acidic residues) spans 482 to 499 (SIKEKEINTSNLEEKPEE).

This sequence belongs to the BBOF1 family. Multiciliated cells.

It is found in the cytoplasm. Its subcellular location is the cytoskeleton. The protein localises to the cilium basal body. Functionally, basal body protein required in multiciliate cells to align and maintain cilia orientation in response to flow. May act by mediating a maturation step that stabilizes and aligns cilia orientation. Not required to respond to planar cell polarity (PCP) or flow-based orientation cues. This is Basal body-orientation factor 1 (ccdc176) from Xenopus laevis (African clawed frog).